Consider the following 136-residue polypeptide: Methylglyoxal synthase (136 aa).

One can recognise an MGS-like domain in the interval 1–136 (MKIALIAHDR…REVVREENEA (136 aa)). Residues His8, Lys12, 34 to 37 (TGTT), and 54 to 55 (SG) each bind substrate. Asp60 serves as the catalytic Proton donor/acceptor. His87 serves as a coordination point for substrate.

The protein belongs to the methylglyoxal synthase family.

The catalysed reaction is dihydroxyacetone phosphate = methylglyoxal + phosphate. Functionally, catalyzes the formation of methylglyoxal from dihydroxyacetone phosphate. This chain is Methylglyoxal synthase, found in Brevibacillus brevis (strain 47 / JCM 6285 / NBRC 100599).